The primary structure comprises 139 residues: Holo-[acyl-carrier-protein] synthase (139 aa).

The Mg(2+) site is built by D8 and E61.

This sequence belongs to the P-Pant transferase superfamily. AcpS family. The cofactor is Mg(2+).

The protein resides in the cytoplasm. The catalysed reaction is apo-[ACP] + CoA = holo-[ACP] + adenosine 3',5'-bisphosphate + H(+). Functionally, transfers the 4'-phosphopantetheine moiety from coenzyme A to a Ser of acyl-carrier-protein. This Bradyrhizobium sp. (strain BTAi1 / ATCC BAA-1182) protein is Holo-[acyl-carrier-protein] synthase.